The chain runs to 51 residues: DNA-directed RNA polymerase subunit Rpo12 (51 aa).

Residues Cys-14, Cys-29, and Cys-32 each contribute to the Zn(2+) site.

The protein belongs to the archaeal Rpo12/eukaryotic RPC10 RNA polymerase subunit family. In terms of assembly, part of the RNA polymerase complex. The cofactor is Zn(2+).

Its subcellular location is the cytoplasm. The enzyme catalyses RNA(n) + a ribonucleoside 5'-triphosphate = RNA(n+1) + diphosphate. Functionally, DNA-dependent RNA polymerase (RNAP) catalyzes the transcription of DNA into RNA using the four ribonucleoside triphosphates as substrates. This Methanopyrus kandleri (strain AV19 / DSM 6324 / JCM 9639 / NBRC 100938) protein is DNA-directed RNA polymerase subunit Rpo12.